A 137-amino-acid polypeptide reads, in one-letter code: Putative pre-16S rRNA nuclease (137 aa).

It belongs to the YqgF nuclease family.

It localises to the cytoplasm. Could be a nuclease involved in processing of the 5'-end of pre-16S rRNA. This chain is Putative pre-16S rRNA nuclease, found in Anaeromyxobacter sp. (strain K).